A 458-amino-acid polypeptide reads, in one-letter code: MVNLRNAVHSFLVHLIGLLVWQSDISVSPVAAIVTDIFNTSDGGRFKFPDGVQNWPALSIVIIIIMTIGGNILVIMAVSMEKKLHNATNYFLMSLAIADMLVGLLVMPLSLLAILYDYVWPLPRYLCPVWISLDVLFSTASIMHLCAISLDRYVAIRNPIEHSRFNSRTKAIMKIAIVWAISIGVSVPIPVIGLRDEEKVFVNNTTCVLNDPNFVLIGSFVAFFIPLTIMVITYCLTIYVLRRQALMLLHGHTEEPPGLSLDFLKCCKRNTAEEENSANPNQDQNARRRKKKERRPRGTMQAINNERKASKVLGIVFFVFLIMWCPFFITNILSVLCEKSCNQKLMEKLLNVFVWIGYVCSGINPLVYTLFNKIYRRAFSNYLRCNYKVEKKPPVRQIPRVAATALSGRELNVNIYRHTNEPVIEKASDNEPGIEMQVENLELPVNPSSVVSERISSV.

An N-terminal signal peptide occupies residues 1–32; it reads MVNLRNAVHSFLVHLIGLLVWQSDISVSPVAA. Over 33–55 the chain is Extracellular; that stretch reads IVTDIFNTSDGGRFKFPDGVQNW. N-linked (GlcNAc...) asparagine glycosylation is present at Asn-39. The chain crosses the membrane as a helical span at residues 56-80; sequence PALSIVIIIIMTIGGNILVIMAVSM. Topologically, residues 81 to 86 are cytoplasmic; that stretch reads EKKLHN. Residues 87–111 form a helical membrane-spanning segment; sequence ATNYFLMSLAIADMLVGLLVMPLSL. The Extracellular portion of the chain corresponds to 112–128; it reads LAILYDYVWPLPRYLCP. Cys-127 and Cys-207 form a disulfide bridge. The helical transmembrane segment at 129 to 151 threads the bilayer; it reads VWISLDVLFSTASIMHLCAISLD. An ergotamine-binding site is contributed by Thr-139. Residues 151-153 carry the DRY motif; important for ligand-induced conformation changes motif; that stretch reads DRY. Residues 152–167 are Cytoplasmic-facing; it reads RYVAIRNPIEHSRFNS. The helical transmembrane segment at 168–189 threads the bilayer; the sequence is RTKAIMKIAIVWAISIGVSVPI. At 190–213 the chain is on the extracellular side; that stretch reads PVIGLRDEEKVFVNNTTCVLNDPN. N-linked (GlcNAc...) asparagine glycosylation occurs at Asn-204. Residue Leu-209 participates in ergotamine binding. The helical transmembrane segment at 214–236 threads the bilayer; that stretch reads FVLIGSFVAFFIPLTIMVITYCL. Residues 237–311 lie on the Cytoplasmic side of the membrane; the sequence is TIYVLRRQAL…AINNERKASK (75 aa). Positions 274-301 are disordered; it reads EENSANPNQDQNARRRKKKERRPRGTMQ. Positions 287–297 are enriched in basic residues; that stretch reads RRRKKKERRPR. A helical transmembrane segment spans residues 312–336; sequence VLGIVFFVFLIMWCPFFITNILSVL. Cys-337 and Cys-341 are joined by a disulfide. Residues 337 to 347 lie on the Extracellular side of the membrane; the sequence is CEKSCNQKLME. A helical membrane pass occupies residues 348-370; it reads KLLNVFVWIGYVCSGINPLVYTL. The NPxxY motif; important for ligand-induced conformation changes and signaling motif lies at 364-368; that stretch reads NPLVY. Topologically, residues 371 to 458 are cytoplasmic; sequence FNKIYRRAFS…SVVSERISSV (88 aa). The PDZ-binding motif lies at 456-458; that stretch reads SSV.

Belongs to the G-protein coupled receptor 1 family. In terms of assembly, interacts with MPDZ. Interacts with ARRB2. Interacts with MPP3; this interaction stabilizes the receptor at the plasma membrane and prevents the desensitization of the HTR2C receptor-mediated calcium response. In terms of processing, N-glycosylated. Detected in brain.

Its subcellular location is the cell membrane. With respect to regulation, inhibited by inverse agonist ritanserin. G-protein coupled receptor for 5-hydroxytryptamine (serotonin). Also functions as a receptor for various drugs and psychoactive substances, including ergot alkaloid derivatives, 1-2,5,-dimethoxy-4-iodophenyl-2-aminopropane (DOI) and lysergic acid diethylamide (LSD). Ligand binding causes a conformation change that triggers signaling via guanine nucleotide-binding proteins (G proteins) and modulates the activity of downstream effectors. HTR2C is coupled to G(q)/G(11) G alpha proteins and activates phospholipase C-beta, releasing diacylglycerol (DAG) and inositol 1,4,5-trisphosphate (IP3) second messengers that modulate the activity of phosphatidylinositol 3-kinase and promote the release of Ca(2+) ions from intracellular stores, respectively. Beta-arrestin family members inhibit signaling via G proteins and mediate activation of alternative signaling pathways. Regulates neuronal activity via the activation of short transient receptor potential calcium channels in the brain, and thereby modulates the activation of pro-opiomelanocortin neurons and the release of CRH that then regulates the release of corticosterone. Plays a role in the regulation of appetite and eating behavior, responses to anxiogenic stimuli and stress. Plays a role in insulin sensitivity and glucose homeostasis. This chain is 5-hydroxytryptamine receptor 2C, found in Homo sapiens (Human).